A 335-amino-acid chain; its full sequence is Pro-cathepsin H (335 aa).

Positions 1-22 (MWATLPLLCAGAWLLGVPVCGA) are cleaved as a signal peptide. Residues 23–97 (AELCVNSLEK…AEIKHKYLWS (75 aa)) constitute a propeptide, activation peptide. N-linked (GlcNAc...) asparagine glycosylation occurs at Asn101. 4 disulfide bridges follow: Cys102–Cys327, Cys138–Cys181, Cys172–Cys214, and Cys272–Cys322. A propeptide spanning residues 106-115 (KSNYLRGTGP) is cleaved from the precursor. Cys141 is a catalytic residue. N-linked (GlcNAc...) asparagine glycosylation is present at Asn230. Active-site residues include His281 and Asn301.

The protein belongs to the peptidase C1 family. Composed of a mini chain and a large chain. The large chain may be split into heavy and light chain. All chains are held together by disulfide bonds.

It localises to the lysosome. It catalyses the reaction Hydrolysis of proteins, acting as an aminopeptidase (notably, cleaving Arg-|-Xaa bonds) as well as an endopeptidase.. Functionally, important for the overall degradation of proteins in lysosomes. The sequence is that of Pro-cathepsin H (CTSH) from Homo sapiens (Human).